The sequence spans 931 residues: Histone-lysine N-methyltransferase EZ1 (931 aa).

Residues 1–30 are compositionally biased toward low complexity; that stretch reads MEAEAAAAVVASSASASASAGRSRPSSSAA. 3 disordered regions span residues 1–37, 372–450, and 491–549; these read MEAE…SNSA, PTHS…ITNR, and RNGN…YDSS. Residues 375–385 are compositionally biased toward polar residues; the sequence is SSDNVMNQPGS. Residues 386-398 are compositionally biased toward basic residues; sequence NRKKNGSSGRKTK. The span at 423–433 shows a compositional bias: polar residues; sequence SNKSPQHSPSP. Residues 500–509 are compositionally biased toward low complexity; that stretch reads SSQQSSPSTR. The segment covering 528-549 has biased composition (basic and acidic residues); it reads AHNDSTEEANNRHSATDGYDSS. Residues 565–615 enclose the SANT domain; the sequence is YLRSWKAIEQGLLVKGLEIFGRNSCLIARNLLGGMKTCKDVFQYMNYIENN. Positions 664–763 constitute a CXC domain; that stretch reads FKRITERKDQ…TLGVPNQRGD (100 aa). One can recognise an SET domain in the interval 778–893; that stretch reads QRVLLGRSDV…AGEELFYDYR (116 aa). Over residues 903–915 the composition is skewed to basic and acidic residues; it reads ARKPEASGAKDDG. The interval 903 to 931 is disordered; sequence ARKPEASGAKDDGQPFNGRAKKLAQNNRG.

It belongs to the class V-like SAM-binding methyltransferase superfamily. Histone-lysine methyltransferase family. EZ subfamily. In terms of tissue distribution, widely expressed.

The protein localises to the nucleus. The catalysed reaction is L-lysyl(27)-[histone H3] + 3 S-adenosyl-L-methionine = N(6),N(6),N(6)-trimethyl-L-lysyl(27)-[histone H3] + 3 S-adenosyl-L-homocysteine + 3 H(+). Functionally, polycomb group (PcG) protein. Catalytic subunit of some PcG multiprotein complex, which methylates 'Lys-27' of histone H3, leading to transcriptional repression of the affected target genes. PcG proteins are not required to initiate repression, but to maintain it during later stages of development. The chain is Histone-lysine N-methyltransferase EZ1 (EZ1) from Zea mays (Maize).